Here is a 509-residue protein sequence, read N- to C-terminus: Heat shock 70 kDa protein 14 (509 aa).

This sequence belongs to the heat shock protein 70 family. As to quaternary structure, component of ribosome-associated complex (RAC), a heterodimer composed of Hsp70/DnaK-type chaperone HSPA14 and Hsp40/DnaJ-type chaperone DNAJC2.

It localises to the cytoplasm. Its subcellular location is the cytosol. Component of the ribosome-associated complex (RAC), a complex involved in folding or maintaining nascent polypeptides in a folding-competent state. In the RAC complex, binds to the nascent polypeptide chain, while DNAJC2 stimulates its ATPase activity. The protein is Heat shock 70 kDa protein 14 (HSPA14) of Pongo abelii (Sumatran orangutan).